Consider the following 336-residue polypeptide: Toluate 1,2-dioxygenase electron transfer component (336 aa).

Residues 3–97 enclose the 2Fe-2S ferredoxin-type domain; it reads HKVATDFEDG…DCVIRVPAAS (95 aa). [2Fe-2S] cluster is bound by residues Cys40, Cys45, Cys48, and Cys81. A ferredoxin-reductase region spans residues 99–336; it reads VCKTQQAGYQ…FYYEKFAASA (238 aa). In terms of domain architecture, FAD-binding FR-type spans 104 to 204; the sequence is QAGYQAAISN…AGPLGAFYLR (101 aa).

It belongs to the bacterial ring-hydroxylating dioxygenase ferredoxin reductase family. As to quaternary structure, this dioxygenase system consists of three proteins: the two subunits of the hydroxylase component (XylX and XylY), and an electron transfer component (XylZ). Requires FAD as cofactor. The cofactor is [2Fe-2S] cluster.

It catalyses the reaction 2 reduced [2Fe-2S]-[ferredoxin] + NAD(+) + H(+) = 2 oxidized [2Fe-2S]-[ferredoxin] + NADH. Its function is as follows. Electron transfer component of toluate 1,2-dioxygenase system. This chain is Toluate 1,2-dioxygenase electron transfer component (xylZ), found in Pseudomonas putida (Arthrobacter siderocapsulatus).